The following is a 575-amino-acid chain: E3 ubiquitin-protein ligase kcmf-1 (575 aa).

A ZZ-type zinc finger spans residues 9-73 (HEGVSCDGCA…PMQLILSSVD (65 aa)). Zn(2+)-binding residues include Cys14, Cys17, Cys29, Cys32, Cys38, Cys41, His59, and His63. 2 disordered regions span residues 277 to 306 (PIYP…DDND) and 530 to 575 (EADE…INID). Acidic residues-rich tracts occupy residues 297–306 (SADESEDDND) and 530–563 (EADE…ENDS).

This sequence belongs to the KCMF1 family.

It localises to the cytoplasm. Its subcellular location is the late endosome. It is found in the lysosome. The catalysed reaction is S-ubiquitinyl-[E2 ubiquitin-conjugating enzyme]-L-cysteine + [acceptor protein]-L-lysine = [E2 ubiquitin-conjugating enzyme]-L-cysteine + N(6)-ubiquitinyl-[acceptor protein]-L-lysine.. The protein operates within protein modification; protein ubiquitination. Its function is as follows. E3 ubiquitin-protein ligase which accepts ubiquitin from an E2 ubiquitin-conjugating enzyme and then transfers it to targeted substrates, promoting their degradation by the proteasome. This chain is E3 ubiquitin-protein ligase kcmf-1, found in Caenorhabditis elegans.